The chain runs to 949 residues: Glycine dehydrogenase (decarboxylating) (949 aa).

The residue at position 702 (Lys702) is an N6-(pyridoxal phosphate)lysine.

This sequence belongs to the GcvP family. In terms of assembly, the glycine cleavage system is composed of four proteins: P, T, L and H. The cofactor is pyridoxal 5'-phosphate.

It carries out the reaction N(6)-[(R)-lipoyl]-L-lysyl-[glycine-cleavage complex H protein] + glycine + H(+) = N(6)-[(R)-S(8)-aminomethyldihydrolipoyl]-L-lysyl-[glycine-cleavage complex H protein] + CO2. Functionally, the glycine cleavage system catalyzes the degradation of glycine. The P protein binds the alpha-amino group of glycine through its pyridoxal phosphate cofactor; CO(2) is released and the remaining methylamine moiety is then transferred to the lipoamide cofactor of the H protein. This chain is Glycine dehydrogenase (decarboxylating), found in Rhodococcoides fascians (Rhodococcus fascians).